Consider the following 247-residue polypeptide: Carboxy-S-adenosyl-L-methionine synthase (247 aa).

Residues tyrosine 40, 65–67, 90–91, 122–123, asparagine 137, and arginine 204 contribute to the S-adenosyl-L-methionine site; these read GSS, DN, and DI.

This sequence belongs to the class I-like SAM-binding methyltransferase superfamily. Cx-SAM synthase family. In terms of assembly, homodimer.

The catalysed reaction is prephenate + S-adenosyl-L-methionine = carboxy-S-adenosyl-L-methionine + 3-phenylpyruvate + H2O. Catalyzes the conversion of S-adenosyl-L-methionine (SAM) to carboxy-S-adenosyl-L-methionine (Cx-SAM). In Pseudomonas syringae pv. syringae (strain B728a), this protein is Carboxy-S-adenosyl-L-methionine synthase.